Reading from the N-terminus, the 499-residue chain is Cytochrome P450 monooxygenase notH' (499 aa).

A helical membrane pass occupies residues Leu11–Phe31. Residues Asn296 and Asn427 are each glycosylated (N-linked (GlcNAc...) asparagine). Cys440 contacts heme.

This sequence belongs to the cytochrome P450 family. The cofactor is heme.

It localises to the membrane. It functions in the pathway alkaloid biosynthesis. Cytochrome P450 monooxygenase; part of the gene cluster that mediates the biosynthesis of notoamide, a fungal indole alkaloid that belongs to a family of natural products containing a characteristic bicyclo[2.2.2]diazaoctane core. The first step of notoamide biosynthesis involves coupling of L-proline and L-tryptophan by the bimodular NRPS notE', to produce cyclo-L-tryptophan-L-proline called brevianamide F. The reverse prenyltransferase notF' then acts as a deoxybrevianamide E synthase and converts brevianamide F to deoxybrevianamide E via reverse prenylation at C-2 of the indole ring leading to the bicyclo[2.2.2]diazaoctane core. Deoxybrevianamide E is further hydroxylated at C-6 of the indole ring, likely catalyzed by the cytochrome P450 monooxygenase notG', to yield 6-hydroxy-deoxybrevianamide E. 6-hydroxy-deoxybrevianamide E is a specific substrate of the prenyltransferase notC' for normal prenylation at C-7 to produce 6-hydroxy-7-prenyl-deoxybrevianamide, also called notoamide S. As the proposed pivotal branching point in notoamide biosynthesis, notoamide S can be diverted to notoamide E through an oxidative pyran ring closure putatively catalyzed by either notH' cytochrome P450 monooxygenase or the notD' FAD-linked oxidoreductase. This step would be followed by an indole 2,3-epoxidation-initiated pinacol-like rearrangement catalyzed by the notB' FAD-dependent monooxygenase leading to the formation of notoamide C and notoamide D. On the other hand notoamide S is converted to notoamide T by notH' (or notD'), a bifunctional oxidase that also functions as the intramolecular Diels-Alderase responsible for generation of (-)-notoamide T. To generate antipodal (+)-notoaminide T, notH (or notD) in Aspergillus strain MF297-2 is expected to catalyze a Diels-Alder reaction leading to the opposite stereochemistry. The remaining oxidoreductase notD' (or notH') likely catalyzes the oxidative pyran ring formation to yield (-)-stephacidin A. The FAD-dependent monooxygenase notI' is highly similar to notB' and is predicted to catalyze a similar conversion from (-)-stephacidin A to (+)-notoamide B via the 2,3-epoxidation of (-)-stephacidin A followed by a pinacol-type rearrangement. Finally, it remains unclear which enzyme could be responsible for the final hydroxylation steps leading to notoamide A and sclerotiamide. The sequence is that of Cytochrome P450 monooxygenase notH' from Aspergillus versicolor.